Consider the following 513-residue polypeptide: Ferulic acid decarboxylase 1 (513 aa).

Residues asparagine 174, histidine 197, and glutamate 240 each contribute to the Mn(2+) site. Prenylated FMN contacts are provided by residues 174–179 (NWSIAR), 196–197 (QH), and glutamate 240. Glutamate 289 acts as the Proton donor in catalysis. Lysine 405 lines the prenylated FMN pocket.

The protein belongs to the UbiD family. UbiD-like/FDC subfamily. Homodimer. May form higher order oligomers. Mn(2+) serves as cofactor. Prenylated FMN is required as a cofactor.

The protein localises to the cytoplasm. It carries out the reaction (E)-4-coumarate + H(+) = 4-vinylphenol + CO2. It catalyses the reaction (E)-cinnamate + H(+) = styrene + CO2. The enzyme catalyses (E)-ferulate + H(+) = 2-methoxy-4-vinylphenol + CO2. In terms of biological role, catalyzes the reversible decarboxylation of aromatic carboxylic acids like ferulic acid, p-coumaric acid or cinnamic acid, producing the corresponding vinyl derivatives 4-vinylphenol, 4-vinylguaiacol, and styrene, respectively, which play the role of aroma metabolites. The chain is Ferulic acid decarboxylase 1 from Candida dubliniensis (strain CD36 / ATCC MYA-646 / CBS 7987 / NCPF 3949 / NRRL Y-17841) (Yeast).